The chain runs to 228 residues: Cytidylate kinase (228 aa).

10-18 (GPSGSGKGT) contacts ATP.

This sequence belongs to the cytidylate kinase family. Type 1 subfamily.

It is found in the cytoplasm. The enzyme catalyses CMP + ATP = CDP + ADP. The catalysed reaction is dCMP + ATP = dCDP + ADP. The polypeptide is Cytidylate kinase (Acinetobacter baumannii (strain SDF)).